The following is a 321-amino-acid chain: Glucokinase (321 aa).

10-15 (GDIGGT) lines the ATP pocket.

The protein belongs to the bacterial glucokinase family.

The protein resides in the cytoplasm. It catalyses the reaction D-glucose + ATP = D-glucose 6-phosphate + ADP + H(+). The protein is Glucokinase of Marinobacter nauticus (strain ATCC 700491 / DSM 11845 / VT8) (Marinobacter aquaeolei).